Here is a 305-residue protein sequence, read N- to C-terminus: Glycine--tRNA ligase alpha subunit (305 aa).

It belongs to the class-II aminoacyl-tRNA synthetase family. In terms of assembly, tetramer of two alpha and two beta subunits.

It localises to the cytoplasm. It carries out the reaction tRNA(Gly) + glycine + ATP = glycyl-tRNA(Gly) + AMP + diphosphate. This chain is Glycine--tRNA ligase alpha subunit, found in Vibrio parahaemolyticus serotype O3:K6 (strain RIMD 2210633).